A 701-amino-acid chain; its full sequence is Glycine--tRNA ligase beta subunit (701 aa).

The protein belongs to the class-II aminoacyl-tRNA synthetase family. Tetramer of two alpha and two beta subunits.

Its subcellular location is the cytoplasm. The catalysed reaction is tRNA(Gly) + glycine + ATP = glycyl-tRNA(Gly) + AMP + diphosphate. This chain is Glycine--tRNA ligase beta subunit, found in Anaeromyxobacter dehalogenans (strain 2CP-C).